We begin with the raw amino-acid sequence, 319 residues long: ATP-dependent 6-phosphofructokinase (319 aa).

Gly-11 is an ATP binding site. 21–25 (RAVVR) contributes to the ADP binding site. ATP-binding positions include 72–73 (RC) and 102–105 (GDGS). Asp-103 contributes to the Mg(2+) binding site. 125 to 127 (TID) is a substrate binding site. The active-site Proton acceptor is the Asp-127. Arg-154 is an ADP binding site. Substrate contacts are provided by residues Arg-162 and 169 to 171 (MGR). ADP is bound by residues 185–187 (GAE), Arg-211, and 213–215 (KKH). Substrate contacts are provided by residues Glu-222, Arg-243, and 249 to 252 (HVQR).

Belongs to the phosphofructokinase type A (PFKA) family. ATP-dependent PFK group I subfamily. Prokaryotic clade 'B1' sub-subfamily. As to quaternary structure, homotetramer. Mg(2+) serves as cofactor.

It is found in the cytoplasm. It carries out the reaction beta-D-fructose 6-phosphate + ATP = beta-D-fructose 1,6-bisphosphate + ADP + H(+). Its pathway is carbohydrate degradation; glycolysis; D-glyceraldehyde 3-phosphate and glycerone phosphate from D-glucose: step 3/4. Allosterically activated by ADP and other diphosphonucleosides, and allosterically inhibited by phosphoenolpyruvate. Functionally, catalyzes the phosphorylation of D-fructose 6-phosphate to fructose 1,6-bisphosphate by ATP, the first committing step of glycolysis. In Bacillus cereus (strain ATCC 14579 / DSM 31 / CCUG 7414 / JCM 2152 / NBRC 15305 / NCIMB 9373 / NCTC 2599 / NRRL B-3711), this protein is ATP-dependent 6-phosphofructokinase.